A 436-amino-acid chain; its full sequence is UPF0597 protein YhaM (436 aa).

The protein belongs to the UPF0597 family.

The chain is UPF0597 protein YhaM from Shigella dysenteriae serotype 1 (strain Sd197).